Consider the following 291-residue polypeptide: Ribosomal RNA small subunit methyltransferase A (291 aa).

S-adenosyl-L-methionine contacts are provided by histidine 37, leucine 39, glycine 64, glutamate 85, aspartate 110, and asparagine 131.

It belongs to the class I-like SAM-binding methyltransferase superfamily. rRNA adenine N(6)-methyltransferase family. RsmA subfamily.

It is found in the cytoplasm. It catalyses the reaction adenosine(1518)/adenosine(1519) in 16S rRNA + 4 S-adenosyl-L-methionine = N(6)-dimethyladenosine(1518)/N(6)-dimethyladenosine(1519) in 16S rRNA + 4 S-adenosyl-L-homocysteine + 4 H(+). In terms of biological role, specifically dimethylates two adjacent adenosines (A1518 and A1519) in the loop of a conserved hairpin near the 3'-end of 16S rRNA in the 30S particle. May play a critical role in biogenesis of 30S subunits. The polypeptide is Ribosomal RNA small subunit methyltransferase A (Dehalococcoides mccartyi (strain ATCC BAA-2266 / KCTC 15142 / 195) (Dehalococcoides ethenogenes (strain 195))).